A 499-amino-acid chain; its full sequence is NADH-quinone oxidoreductase subunit 14 (499 aa).

14 helical membrane-spanning segments follow: residues 9–29 (ILPE…GAYL), 37–57 (TLLW…GLGN), 76–96 (FAKV…ADYM), 104–124 (FEFP…VSAG), 126–146 (LLTL…VAAM), 161–181 (FVLG…VYGF), 196–216 (AGHL…GLSF), 235–255 (PTPV…ALIA), 269–289 (WSQI…IAGI), 301–321 (SSIA…AIGV), 324–344 (MLLY…FILS), 369–389 (ALAM…LGFF), 402–422 (GMGW…FYYL), and 446–466 (YLAL…MFGV).

Belongs to the complex I subunit 2 family. As to quaternary structure, NDH-1 is composed of at least 14 different subunits, Nqo1 to Nqo14. The complex has a L-shaped structure, with the hydrophobic arm (subunits Nqo7, Nqo8, Nqo10 to Nqo14) embedded in the inner membrane and the hydrophilic peripheral arm (subunits Nqo1 to Nqo6, Nqo9) protruding into the bacterial cytoplasm. The hydrophilic domain contains all the redox centers.

Its subcellular location is the cell inner membrane. The enzyme catalyses a quinone + NADH + 5 H(+)(in) = a quinol + NAD(+) + 4 H(+)(out). Its function is as follows. NDH-1 shuttles electrons from NADH, via FMN and iron-sulfur (Fe-S) centers, to quinones in the respiratory chain. The immediate electron acceptor for the enzyme in this species is believed to be ubiquinone. Couples the redox reaction to proton translocation (for every two electrons transferred, four hydrogen ions are translocated across the cytoplasmic membrane), and thus conserves the redox energy in a proton gradient. The protein is NADH-quinone oxidoreductase subunit 14 of Paracoccus denitrificans.